A 116-amino-acid chain; its full sequence is DNA-binding protein Tpen_0471 (116 aa).

This sequence belongs to the PDCD5 family.

The polypeptide is DNA-binding protein Tpen_0471 (Thermofilum pendens (strain DSM 2475 / Hrk 5)).